Here is a 161-residue protein sequence, read N- to C-terminus: Regulator of ribonuclease activity A (161 aa).

The protein belongs to the RraA family. Homotrimer. Binds to both RNA-binding sites in the C-terminal region of Rne and to RhlB.

Its subcellular location is the cytoplasm. Globally modulates RNA abundance by binding to RNase E (Rne) and regulating its endonucleolytic activity. Can modulate Rne action in a substrate-dependent manner by altering the composition of the degradosome. Modulates RNA-binding and helicase activities of the degradosome. In Serratia proteamaculans (strain 568), this protein is Regulator of ribonuclease activity A.